A 364-amino-acid polypeptide reads, in one-letter code: 3-dehydroquinate synthase (364 aa).

NAD(+) is bound by residues 73 to 78 (DGEQNK), 107 to 111 (GVIGD), 131 to 132 (TT), Lys144, Lys153, and 171 to 174 (CLCT). Zn(2+)-binding residues include Glu186, His249, and His266.

It belongs to the sugar phosphate cyclases superfamily. Dehydroquinate synthase family. The cofactor is NAD(+). It depends on Co(2+) as a cofactor. Zn(2+) is required as a cofactor.

It is found in the cytoplasm. The catalysed reaction is 7-phospho-2-dehydro-3-deoxy-D-arabino-heptonate = 3-dehydroquinate + phosphate. The protein operates within metabolic intermediate biosynthesis; chorismate biosynthesis; chorismate from D-erythrose 4-phosphate and phosphoenolpyruvate: step 2/7. Catalyzes the conversion of 3-deoxy-D-arabino-heptulosonate 7-phosphate (DAHP) to dehydroquinate (DHQ). In Blochmanniella floridana, this protein is 3-dehydroquinate synthase.